Here is a 378-residue protein sequence, read N- to C-terminus: tRNA (guanine(37)-N(1))-methyltransferase (378 aa).

Residues His196, 234-235 (DL), 262-263 (DA), and Asn282 contribute to the S-adenosyl-L-methionine site.

This sequence belongs to the class I-like SAM-binding methyltransferase superfamily. TRM5/TYW2 family. Monomer.

It localises to the mitochondrion matrix. It is found in the nucleus. Its subcellular location is the cytoplasm. It carries out the reaction guanosine(37) in tRNA + S-adenosyl-L-methionine = N(1)-methylguanosine(37) in tRNA + S-adenosyl-L-homocysteine + H(+). Its function is as follows. Specifically methylates the N1 position of guanosine-37 in various cytoplasmic and mitochondrial tRNAs. Methylation is not dependent on the nature of the nucleoside 5' of the target nucleoside. This is the first step in the biosynthesis of wybutosine (yW), a modified base adjacent to the anticodon of tRNAs and required for accurate decoding. The chain is tRNA (guanine(37)-N(1))-methyltransferase from Trichomonas vaginalis (strain ATCC PRA-98 / G3).